The following is a 215-amino-acid chain: Cytochrome b6 (215 aa).

The chain crosses the membrane as a helical span at residues 32–52 (IFYCFGGITFTCFLVQVATGF). C35 is a heme c binding site. The heme b site is built by H86 and H100. A run of 3 helical transmembrane segments spans residues 90-110 (ASMM…TGGF), 116-136 (LTWV…VTGY), and 186-206 (LHTF…FLMI). Heme b contacts are provided by H187 and H202.

This sequence belongs to the cytochrome b family. PetB subfamily. In terms of assembly, the 4 large subunits of the cytochrome b6-f complex are cytochrome b6, subunit IV (17 kDa polypeptide, PetD), cytochrome f and the Rieske protein, while the 4 small subunits are PetG, PetL, PetM and PetN. The complex functions as a dimer. Requires heme b as cofactor. Heme c is required as a cofactor.

The protein localises to the plastid. It localises to the chloroplast thylakoid membrane. Functionally, component of the cytochrome b6-f complex, which mediates electron transfer between photosystem II (PSII) and photosystem I (PSI), cyclic electron flow around PSI, and state transitions. This Auxenochlorella protothecoides (Green microalga) protein is Cytochrome b6.